We begin with the raw amino-acid sequence, 576 residues long: Polypeptide N-acetylgalactosaminyltransferase 12 (576 aa).

Residues 1 to 19 lie on the Cytoplasmic side of the membrane; it reads MWGRAVRRRCPRGLRRGRE. Residues 20-37 traverse the membrane as a helical; Signal-anchor for type II membrane protein segment; that stretch reads ALLALLALAGLGALLRAR. A disordered region spans residues 38–58; that stretch reads SRSGTVDPGPPRTPLPGRHEP. Residues 38–576 are Lumenal-facing; that stretch reads SRSGTVDPGP…QRWFFKERMS (539 aa). 5 disulfides stabilise this stretch: C120/C353, C344/C417, C453/C474, C501/C516, and C542/C561. Positions 130–239 are catalytic subdomain A; that stretch reads LPKTSVVIAF…EGWLEPLLQR (110 aa). Residues D171 and R200 each contribute to the substrate site. Residues D223 and H225 each contribute to the Mn(2+) site. The interval 299-361 is catalytic subdomain B; the sequence is VIRSPTMAGG…PCSHVGHVFP (63 aa). Residue W330 participates in substrate binding. H358 lines the Mn(2+) pocket. A substrate-binding site is contributed by Y366. In terms of domain architecture, Ricin B-type lectin spans 440 to 572; that stretch reads FFGMLQNRGL…NSDNQRWFFK (133 aa).

It belongs to the glycosyltransferase 2 family. GalNAc-T subfamily. The cofactor is Mn(2+).

It localises to the golgi apparatus membrane. The catalysed reaction is L-seryl-[protein] + UDP-N-acetyl-alpha-D-galactosamine = a 3-O-[N-acetyl-alpha-D-galactosaminyl]-L-seryl-[protein] + UDP + H(+). It catalyses the reaction L-threonyl-[protein] + UDP-N-acetyl-alpha-D-galactosamine = a 3-O-[N-acetyl-alpha-D-galactosaminyl]-L-threonyl-[protein] + UDP + H(+). Its pathway is protein modification; protein glycosylation. Its function is as follows. Catalyzes the initial reaction in O-linked oligosaccharide biosynthesis, the transfer of an N-acetyl-D-galactosamine residue to a serine or threonine residue on the protein receptor. Has activity toward non-glycosylated peptides such as Muc5AC, Muc1a and EA2, and no detectable activity with Muc2 and Muc7. Displays enzymatic activity toward the Gal-NAc-Muc5AC glycopeptide, but no detectable activity to mono-GalNAc-glycosylated Muc1a, Muc2, Muc7 and EA2. May play an important role in the initial step of mucin-type oligosaccharide biosynthesis in digestive organs. This is Polypeptide N-acetylgalactosaminyltransferase 12 (Galnt12) from Mus musculus (Mouse).